A 646-amino-acid chain; its full sequence is Kinesin-like protein klp-20 (646 aa).

Residues 6 to 331 (KVKVVVRCRP…LRYANRAKNI (326 aa)) form the Kinesin motor domain. An ATP-binding site is contributed by 91–98 (GQTGTGKT). Residues 342 to 552 (KDAQLRKFQL…LRKELLLNIA (211 aa)) adopt a coiled-coil conformation. The interval 525 to 550 (LEEDHQRQVEAMLDDIRQLRKELLLN) is interaction with klp-11. The disordered stretch occupies residues 623–646 (TAEHRPRTSSKKHRASIRLQQLLT). The span at 629-638 (RTSSKKHRAS) shows a compositional bias: basic residues.

It belongs to the TRAFAC class myosin-kinesin ATPase superfamily. Kinesin family. Kinesin II subfamily. In terms of assembly, component of the kinesin II motor complex, a heterotrimeric complex composed of kap-1, klp-11 and klp-20. Interacts (via C-terminus) with klp-11 (via C-terminus) to form a heterodimer. Furthermore, within the heterodimer, the C-termini of klp-20 and klp-11 interact to form a coiled coil (stalk) or tail domain, and this is necessary for association with kap-1, and kinesin II motor complex activity upon IFT cargo binding. Prior to cargo binding, the klp-11/klp-20 heterodimer is autoinhibited by the tail domain of the heterodimer, which folds onto the kinesin motor domain. Cargo binding to the heterodimer relieves the autoinhibition, and allows for an extended conformation of the tail domain, and function of the heterodimer.

It localises to the cell projection. It is found in the cilium. The protein localises to the cytoplasm. Its subcellular location is the cytoskeleton. Functionally, component of the kinesin II motor complex (composed of kap-1 and the heterodimeric motor proteins klp-11 and klp-20) which is required for intraflagellar transport (IFT). Heterodimerizes with klp-11 to form a 'processive' molecular motor upon IFT cargo binding, which, within the kinesin II motor complex, binds to and moves along microtubules in a unidirectional manner (without dissociation of the heterodimer), and in turn, is responsible for the IFT of cargo. Specifically, the kinesin II motor complex, together with the kinesin motor protein osm-3 moves along microtubules and is required for anterograde IFT along the middle segment of the sensory neuron cilia. In particular, the kinesin II motor complex delivers specific ciliary cargo proteins such as che-3 which are related to motility to ciliary tips. This is likely mediated by IFT complexes A and B. This is Kinesin-like protein klp-20 from Caenorhabditis elegans.